Here is a 454-residue protein sequence, read N- to C-terminus: UPF0210 protein EUBELI_01067 (454 aa).

It belongs to the UPF0210 family. Homodimer.

The sequence is that of UPF0210 protein EUBELI_01067 from Lachnospira eligens (strain ATCC 27750 / DSM 3376 / VPI C15-48 / C15-B4) (Eubacterium eligens).